Consider the following 216-residue polypeptide: MRLTLLLEMAAKLKLPHDYRFGMSRPSTLAAKRRNPPGKRRSKVFVEPVSKEEWQYFRGDTVEVLHGKDAGKQGKVTQVVRARNWVVVDGLNTHFRYVGRTDEYRGTYVASEGPLLLNQVSLIDPTDRKPTEIEWRYTEEGERVRVSARSGRIIPKPVLQRRDGIIPEQWKDGPKDTSVEDALERTYVPSLKTFQEEIMEKTGIAENRRHRKSYWY.

Residues 1-9 constitute a mitochondrion transit peptide; it reads MRLTLLLEM. The KOW domain occupies 56–89; that stretch reads YFRGDTVEVLHGKDAGKQGKVTQVVRARNWVVVD.

Belongs to the universal ribosomal protein uL24 family. As to quaternary structure, component of the mitochondrial ribosome large subunit (39S) which comprises a 16S rRNA and about 50 distinct proteins. As to expression, ubiquitous. Expressed at greater levels in the kidney, adipose tissue, muscle and liver than the brain, heart, ovary and lung.

It is found in the mitochondrion. The sequence is that of Large ribosomal subunit protein uL24m (mrpl24) from Xenopus laevis (African clawed frog).